The sequence spans 185 residues: Anaphase-promoting complex subunit 10 (185 aa).

Thr-2 is modified (N-acetylthreonine). Residues 2–185 (TTPNKTPPGA…IDFMMYRSIR (184 aa)) form the DOC domain. N6-acetyllysine is present on Lys-169.

The protein belongs to the APC10 family. The mammalian APC/C is composed at least of 14 distinct subunits ANAPC1, ANAPC2, CDC27/APC3, ANAPC4, ANAPC5, CDC16/APC6, ANAPC7, CDC23/APC8, ANAPC10, ANAPC11, CDC26/APC12, ANAPC13, ANAPC15 and ANAPC16 that assemble into a complex of at least 19 chains with a combined molecular mass of around 1.2 MDa; APC/C interacts with FZR1 and FBXO5. The C-terminus of APC10 binds to CDC27/APC3. Interacts with PIWIL1; interaction only takes place when PIWIL1 binds piRNA. Interacts with FBXO43; the interaction is direct.

The protein operates within protein modification; protein ubiquitination. In terms of biological role, component of the anaphase promoting complex/cyclosome (APC/C), a cell cycle-regulated E3 ubiquitin ligase that controls progression through mitosis and the G1 phase of the cell cycle. The APC/C complex acts by mediating ubiquitination and subsequent degradation of target proteins: it mainly mediates the formation of 'Lys-11'-linked polyubiquitin chains and, to a lower extent, the formation of 'Lys-48'- and 'Lys-63'-linked polyubiquitin chains. The APC/C complex catalyzes assembly of branched 'Lys-11'-/'Lys-48'-linked branched ubiquitin chains on target proteins. The sequence is that of Anaphase-promoting complex subunit 10 (ANAPC10) from Bos taurus (Bovine).